The primary structure comprises 806 residues: Leucine--tRNA ligase (806 aa).

Positions 40 to 51 (PYPSGKGLHVGH) match the 'HIGH' region motif. Positions 580-584 (KMSKS) match the 'KMSKS' region motif. Lys583 contributes to the ATP binding site.

This sequence belongs to the class-I aminoacyl-tRNA synthetase family.

The protein resides in the cytoplasm. It catalyses the reaction tRNA(Leu) + L-leucine + ATP = L-leucyl-tRNA(Leu) + AMP + diphosphate. This is Leucine--tRNA ligase from Ureaplasma parvum serovar 3 (strain ATCC 27815 / 27 / NCTC 11736).